The sequence spans 256 residues: Small ribosomal subunit protein eS1 (256 aa).

Residues 1-18 (MAVGKNKRLSKGKKGIKK) show a composition bias toward basic residues. The tract at residues 1 to 20 (MAVGKNKRLSKGKKGIKKRT) is disordered. At A2 the chain carries N-acetylalanine; partial.

It belongs to the eukaryotic ribosomal protein eS1 family. In terms of assembly, component of the small ribosomal subunit. Mature ribosomes consist of a small (40S) and a large (60S) subunit. The 40S subunit contains about 33 different proteins and 1 molecule of RNA (18S). The 60S subunit contains about 49 different proteins and 3 molecules of RNA (25S, 5.8S and 5S).

The protein localises to the cytoplasm. This chain is Small ribosomal subunit protein eS1 (rps1), found in Aspergillus terreus (strain NIH 2624 / FGSC A1156).